The chain runs to 472 residues: ATP synthase subunit beta (472 aa).

An ATP-binding site is contributed by 150–157; it reads GGAGVGKT.

This sequence belongs to the ATPase alpha/beta chains family. In terms of assembly, F-type ATPases have 2 components, CF(1) - the catalytic core - and CF(0) - the membrane proton channel. CF(1) has five subunits: alpha(3), beta(3), gamma(1), delta(1), epsilon(1). CF(0) has four main subunits: a, b, b' and c.

It is found in the cellular chromatophore membrane. The enzyme catalyses ATP + H2O + 4 H(+)(in) = ADP + phosphate + 5 H(+)(out). In terms of biological role, produces ATP from ADP in the presence of a proton gradient across the membrane. The catalytic sites are hosted primarily by the beta subunits. The sequence is that of ATP synthase subunit beta from Rhodobacter capsulatus (Rhodopseudomonas capsulata).